The chain runs to 450 residues: UDP-N-acetylmuramoylalanine--D-glutamate ligase (450 aa).

119–125 (GSNGKTT) is a binding site for ATP.

It belongs to the MurCDEF family.

The protein resides in the cytoplasm. The catalysed reaction is UDP-N-acetyl-alpha-D-muramoyl-L-alanine + D-glutamate + ATP = UDP-N-acetyl-alpha-D-muramoyl-L-alanyl-D-glutamate + ADP + phosphate + H(+). Its pathway is cell wall biogenesis; peptidoglycan biosynthesis. In terms of biological role, cell wall formation. Catalyzes the addition of glutamate to the nucleotide precursor UDP-N-acetylmuramoyl-L-alanine (UMA). In Streptococcus pneumoniae serotype 4 (strain ATCC BAA-334 / TIGR4), this protein is UDP-N-acetylmuramoylalanine--D-glutamate ligase.